A 1298-amino-acid polypeptide reads, in one-letter code: Phosphoribosylformylglycinamidine synthase (1298 aa).

Residues 303 to 327 are disordered; the sequence is FPGAATGSGGEIRDEGATGRGAKPK. ATP contacts are provided by residues 305-316, 384-386, and A676; these read GAATGSGGEIRD and TGY. The Mg(2+) site is built by D677, E716, N720, and D884. S886 contributes to the ATP binding site. A Glutamine amidotransferase type-1 domain is found at 1045–1298; sequence VAVLREQGVN…MFRNARAWVN (254 aa). C1138 serves as the catalytic Nucleophile. Catalysis depends on residues H1263 and E1265.

It in the N-terminal section; belongs to the FGAMS family. As to quaternary structure, monomer.

Its subcellular location is the cytoplasm. It carries out the reaction N(2)-formyl-N(1)-(5-phospho-beta-D-ribosyl)glycinamide + L-glutamine + ATP + H2O = 2-formamido-N(1)-(5-O-phospho-beta-D-ribosyl)acetamidine + L-glutamate + ADP + phosphate + H(+). The protein operates within purine metabolism; IMP biosynthesis via de novo pathway; 5-amino-1-(5-phospho-D-ribosyl)imidazole from N(2)-formyl-N(1)-(5-phospho-D-ribosyl)glycinamide: step 1/2. Phosphoribosylformylglycinamidine synthase involved in the purines biosynthetic pathway. Catalyzes the ATP-dependent conversion of formylglycinamide ribonucleotide (FGAR) and glutamine to yield formylglycinamidine ribonucleotide (FGAM) and glutamate. The sequence is that of Phosphoribosylformylglycinamidine synthase from Pseudomonas savastanoi pv. phaseolicola (strain 1448A / Race 6) (Pseudomonas syringae pv. phaseolicola (strain 1448A / Race 6)).